A 140-amino-acid polypeptide reads, in one-letter code: Profilin (140 aa).

Residue S2 is modified to N-acetylserine.

The protein belongs to the profilin family. In terms of assembly, occurs in many kinds of cells as a complex with monomeric actin in a 1:1 ratio.

It is found in the cytoplasm. Its subcellular location is the cytoskeleton. Binds to actin and affects the structure of the cytoskeleton. At high concentrations, profilin prevents the polymerization of actin, whereas it enhances it at low concentrations. By binding to PIP2, it inhibits the formation of IP3 and DG. The sequence is that of Profilin from Heliocidaris crassispina (Sea urchin).